The sequence spans 359 residues: Glutamate 5-kinase (359 aa).

Lys7 is a binding site for ATP. 3 residues coordinate substrate: Ser47, Asp135, and Asn147. 202–208 contacts ATP; it reads SGGITSK. A PUA domain is found at 266 to 343; it reads KGSIFINEGA…DQLEDVLGYS (78 aa).

This sequence belongs to the glutamate 5-kinase family.

Its subcellular location is the cytoplasm. The enzyme catalyses L-glutamate + ATP = L-glutamyl 5-phosphate + ADP. Its pathway is amino-acid biosynthesis; L-proline biosynthesis; L-glutamate 5-semialdehyde from L-glutamate: step 1/2. Functionally, catalyzes the transfer of a phosphate group to glutamate to form L-glutamate 5-phosphate. The protein is Glutamate 5-kinase of Kosmotoga olearia (strain ATCC BAA-1733 / DSM 21960 / TBF 19.5.1).